Reading from the N-terminus, the 553-residue chain is Arginine--tRNA ligase (553 aa).

Positions 130 to 140 (ANPTGPIHLGG) match the 'HIGH' region motif.

It belongs to the class-I aminoacyl-tRNA synthetase family. In terms of assembly, monomer.

Its subcellular location is the cytoplasm. The enzyme catalyses tRNA(Arg) + L-arginine + ATP = L-arginyl-tRNA(Arg) + AMP + diphosphate. The chain is Arginine--tRNA ligase from Corynebacterium aurimucosum (strain ATCC 700975 / DSM 44827 / CIP 107346 / CN-1) (Corynebacterium nigricans).